Reading from the N-terminus, the 547-residue chain is Sterol carrier protein 2 (547 aa).

Serine 3 carries the post-translational modification Phosphoserine. Residue lysine 132 is modified to N6-acetyllysine; alternate. An N6-succinyllysine; alternate modification is found at lysine 132. Lysine 168 carries the N6-succinyllysine modification. N6-acetyllysine is present on residues lysine 173 and lysine 177. At lysine 183 the chain carries N6-acetyllysine; alternate. Position 183 is an N6-succinyllysine; alternate (lysine 183). Position 282 is an N6-succinyllysine (lysine 282). N6-acetyllysine; alternate is present on residues lysine 341, lysine 432, lysine 438, lysine 443, and lysine 453. 5 positions are modified to N6-succinyllysine; alternate: lysine 341, lysine 432, lysine 438, lysine 443, and lysine 453. Positions 433–543 constitute an SCP2 domain; the sequence is ANLVFKEIEK…KLQNLQLQPG (111 aa). The residue at position 464 (lysine 464) is an N6-succinyllysine. Lysine 470 is modified (N6-acetyllysine; alternate). The residue at position 470 (lysine 470) is an N6-succinyllysine; alternate. Lysine 479 carries the post-translational modification N6-succinyllysine. Lysine 491 carries the N6-acetyllysine modification. 2 positions are modified to N6-succinyllysine: lysine 492 and lysine 511. Serine 516 bears the Phosphoserine mark. 2 positions are modified to N6-succinyllysine: lysine 522 and lysine 534. Positions 545–547 match the Microbody targeting signal motif; the sequence is AKL.

The protein in the N-terminal section; belongs to the thiolase-like superfamily. Thiolase family. As to quaternary structure, interacts with PEX5; the interaction is essential for peroxisomal import. Post-translationally, preSCP2, a protein with a molecular mass of about 15 kDa, is processed into its mature form (SCP2) by proteolytic cleavage of a 20 residue leader sequence after translocation into peroxisomes. As to expression, liver, fibroblasts, and placenta.

It localises to the peroxisome. The protein resides in the cytoplasm. It is found in the mitochondrion. The protein localises to the endoplasmic reticulum. It carries out the reaction choloyl-CoA + propanoyl-CoA = 3alpha,7alpha,12alpha-trihydroxy-24-oxo-5beta-cholestan-26-oyl-CoA + CoA. The catalysed reaction is 4,8,12-trimethyltridecanoyl-CoA + propanoyl-CoA = 3-oxopristanoyl-CoA + CoA. It catalyses the reaction an acyl-CoA + acetyl-CoA = a 3-oxoacyl-CoA + CoA. The enzyme catalyses hexanoyl-CoA + acetyl-CoA = 3-oxooctanoyl-CoA + CoA. It carries out the reaction tetradecanoyl-CoA + acetyl-CoA = 3-oxohexadecanoyl-CoA + CoA. The catalysed reaction is 3-oxohexadecanedioyl-CoA + CoA = tetradecanedioyl-CoA + acetyl-CoA. It catalyses the reaction propanoyl-CoA + tetradecanoyl-CoA = 3-oxo-2-methylhexadecanoyl-CoA + CoA. The enzyme catalyses butanoyl-CoA + acetyl-CoA = 3-oxohexanoyl-CoA + CoA. It carries out the reaction octanoyl-CoA + acetyl-CoA = 3-oxodecanoyl-CoA + CoA. The catalysed reaction is decanoyl-CoA + acetyl-CoA = 3-oxododecanoyl-CoA + CoA. It catalyses the reaction dodecanoyl-CoA + acetyl-CoA = 3-oxotetradecanoyl-CoA + CoA. The enzyme catalyses hexadecanoyl-CoA + acetyl-CoA = 3-oxooctadecanoyl-CoA + CoA. It carries out the reaction 3-oxo-(9Z-octadecenoyl)-CoA + CoA = (7Z)-hexadecenoyl-CoA + acetyl-CoA. The catalysed reaction is 7-dehydrocholesterol(in) = 7-dehydrocholesterol(out). Plays a crucial role in the peroxisomal oxidation of branched-chain fatty acids. Catalyzes the last step of the peroxisomal beta-oxidation of branched chain fatty acids and the side chain of the bile acid intermediates di- and trihydroxycoprostanic acids (DHCA and THCA). Also active with medium and long straight chain 3-oxoacyl-CoAs. Stimulates the microsomal conversion of 7-dehydrocholesterol to cholesterol and transfers phosphatidylcholine and 7-dehydrocholesterol between membrances, in vitro. Isoforms SCP2 and SCPx cooperate in peroxisomal oxidation of certain naturally occurring tetramethyl-branched fatty acyl-CoAs. Functionally, mediates the transfer of all common phospholipids, cholesterol and gangliosides from the endoplasmic reticulum to the plasma membrane. May play a role in regulating steroidogenesis. Stimulates the microsomal conversion of 7-dehydrocholesterol to cholesterol. Also binds fatty acids and fatty acyl Coenzyme A (CoA) such as phytanoyl-CoA. Involved in the regulation phospholipid synthesis in endoplasmic reticulum enhancing the incorporation of exogenous fatty acid into glycerides. Seems to stimulate the rate-limiting step in phosphatidic acid formation mediated by GPAT3. Isoforms SCP2 and SCPx cooperate in peroxisomal oxidation of certain naturally occurring tetramethyl-branched fatty acyl-CoAs. The sequence is that of Sterol carrier protein 2 from Homo sapiens (Human).